A 312-amino-acid chain; its full sequence is MNWTELSIIINHEAVELATNILENHGSNGVVIEDSYDLINQPEDKYGEIYALKKEDYPDKGVRLKAYFNELTYDDKLRQRIKDELLNLDELDQHNVQFSEQIIAETDWENEWKNYFHPFRASKKFTIVPSWETYAKEADEELCIELDPGMAFGTGDHPTTSMCLKAIETYVLPQHSVIDVGTGSGILSIASYLIGVKRIKALDIDEMAVSVAKENFRRNHCETLIEAVPGNLLKDETEKFDIVIANILAHIIDEMIDDAYNTLNEGGYFITSGIIKEKYEGIQSHMERVGFKIISEQHDNGWVCLVGQKVSE.

4 residues coordinate S-adenosyl-L-methionine: threonine 160, glycine 181, aspartate 203, and asparagine 246.

It belongs to the methyltransferase superfamily. PrmA family.

The protein resides in the cytoplasm. It catalyses the reaction L-lysyl-[protein] + 3 S-adenosyl-L-methionine = N(6),N(6),N(6)-trimethyl-L-lysyl-[protein] + 3 S-adenosyl-L-homocysteine + 3 H(+). Methylates ribosomal protein L11. The chain is Ribosomal protein L11 methyltransferase from Staphylococcus aureus (strain MRSA252).